A 469-amino-acid chain; its full sequence is MVISVATPRRSIRDAVLGGVLGAGGRQLYQPLRCAFYDGAAGGGLTAALSEDGAEGGVPLPCGRKTAAAKNVLILMSDTGGGHRASAEALRDAFRLEFGDAYQVFVRDLGKEYGGWPLNDMERSYKFMIRHVRLWKVAFHGTSPRWVHGMYLAALAYFYANEVVAGIMRYNPDIIISVHPLMQHIPLWVLKWQSLHPKVPFVTVITDLNTCHPTWFHHGVTRCYCPSAEVAKRALLRGLEPSQIRVYGLPIRPSFCRAVLDKDELRKELDMDPDLPAVLLMGGGEGMGPVEETATALSDELYDRRRRRPVGQIVVICGRNQVLRSTLQSSRWNVPVKIRGFEKQMEKWMGACDCIITKAGPGTIAEALIRGLPIILNDFIPGQEVGNVPYVVDNGAGVFSKDPREAARQVARWFTTHTNELRRYSLNALKLAQPEAVFDIVKDIHKLQQQPATVTRIPYSLTSSFSYSI.

The N-terminal 42 residues, 1–42 (MVISVATPRRSIRDAVLGGVLGAGGRQLYQPLRCAFYDGAAG), are a transit peptide targeting the chloroplast.

This sequence belongs to the glycosyltransferase 28 family.

The protein resides in the plastid. The protein localises to the chloroplast membrane. The enzyme catalyses a 1,2-diacyl-sn-glycerol + UDP-alpha-D-galactose = a 1,2-diacyl-3-O-(beta-D-galactosyl)-sn-glycerol + UDP + H(+). Its function is as follows. Involved in the synthesis of the major structural component of photosynthetic membranes. This is Probable monogalactosyldiacylglycerol synthase 2, chloroplastic (MGD2) from Oryza sativa subsp. indica (Rice).